Here is a 597-residue protein sequence, read N- to C-terminus: Proline--tRNA ligase (597 aa).

This sequence belongs to the class-II aminoacyl-tRNA synthetase family. ProS type 1 subfamily. Homodimer.

It localises to the cytoplasm. It carries out the reaction tRNA(Pro) + L-proline + ATP = L-prolyl-tRNA(Pro) + AMP + diphosphate. In terms of biological role, catalyzes the attachment of proline to tRNA(Pro) in a two-step reaction: proline is first activated by ATP to form Pro-AMP and then transferred to the acceptor end of tRNA(Pro). As ProRS can inadvertently accommodate and process non-cognate amino acids such as alanine and cysteine, to avoid such errors it has two additional distinct editing activities against alanine. One activity is designated as 'pretransfer' editing and involves the tRNA(Pro)-independent hydrolysis of activated Ala-AMP. The other activity is designated 'posttransfer' editing and involves deacylation of mischarged Ala-tRNA(Pro). The misacylated Cys-tRNA(Pro) is not edited by ProRS. The polypeptide is Proline--tRNA ligase (Bifidobacterium longum (strain NCC 2705)).